The chain runs to 211 residues: Cytochrome c biogenesis ATP-binding export protein CcmA (211 aa).

In terms of domain architecture, ABC transporter spans 1 to 211 (MAIHNLACVR…RMAEATSCFG (211 aa)). 33–40 (GSNGAGKT) contacts ATP.

The protein belongs to the ABC transporter superfamily. CcmA exporter (TC 3.A.1.107) family. As to quaternary structure, the complex is composed of two ATP-binding proteins (CcmA) and two transmembrane proteins (CcmB).

Its subcellular location is the cell inner membrane. The enzyme catalyses heme b(in) + ATP + H2O = heme b(out) + ADP + phosphate + H(+). Its function is as follows. Part of the ABC transporter complex CcmAB involved in the biogenesis of c-type cytochromes; once thought to export heme, this seems not to be the case, but its exact role is uncertain. Responsible for energy coupling to the transport system. The protein is Cytochrome c biogenesis ATP-binding export protein CcmA of Sodalis glossinidius (strain morsitans).